Reading from the N-terminus, the 134-residue chain is Small ribosomal subunit protein uS9 (134 aa).

A disordered region spans residues 114-134 (QKESKNFGGPGARAKYQKSYR).

This sequence belongs to the universal ribosomal protein uS9 family.

The chain is Small ribosomal subunit protein uS9 from Methanosarcina acetivorans (strain ATCC 35395 / DSM 2834 / JCM 12185 / C2A).